A 460-amino-acid polypeptide reads, in one-letter code: Cyclic 2,3-diphosphoglycerate synthetase (460 aa).

Homodimer.

The protein localises to the cytoplasm. It carries out the reaction (2R)-2,3-bisphosphoglycerate + ATP + H(+) = cyclic (2R)-2,3-bisphosphoglycerate + ADP + phosphate. Catalyzes the formation of cyclic 2,3-diphosphoglycerate (cDPG) by formation of an intramolecular phosphoanhydride bond at the expense of ATP. It is also able to catalyze the hydrolysis of cDPG but with significant slower rates (8-10 times). May be involved in thermoadaptation. The sequence is that of Cyclic 2,3-diphosphoglycerate synthetase (cpgS) from Methanothermus fervidus (strain ATCC 43054 / DSM 2088 / JCM 10308 / V24 S).